The sequence spans 523 residues: MSVRPFESPPPYRPDEFKPNHYAPSNDMYGGEMHVRPMLSQPAYSFYPEDEILHFYKWTSPPGVIRILSMLVIVMCIAVFACVASTLAWDRAYGTGIFGGSMNYPYGSGFGSYGGGFGGYGYGYGYGYGGYTDPRAAKGFLLAMAAFCFIASLVIFVTSVIRSGMSRTRRYYLIVIIVSAILGIMVFIATIVYIMGVNPTAQASGSMYGSQIYTICSQFYTPGGTGLYVDQYLYHYCVVDPQEAIAIVLGFMIIVAFALIIVFAVKTRRKMDRYDKSNILWDKEHIYDEQPPNVEEWVKNVSAGTQDMPPPPSDYAERVDSPMAYSSNGKVNGKRSYPDSLYKSPPLVPEVAQEIPLTLSVDDFRQPRYSSNDNLETPSKRTPTKGKAGKAKRTDPDHYETDYTTGGESCDELEEDWLREYPPITSDQQRQLYKRNFDAGLQEYKSLLAELDEVNKELSRLDRELDDYREESEEYMAAADEYNRLKQVKGSADYKSKKNYCKQLKSKLSHIKRMVGDYDRRKT.

The segment at 1–20 (MSVRPFESPPPYRPDEFKPN) is disordered. At 1–66 (MSVRPFESPP…KWTSPPGVIR (66 aa)) the chain is on the cytoplasmic side. The 210-residue stretch at 60 to 269 (SPPGVIRILS…IIVFAVKTRR (210 aa)) folds into the MARVEL domain. Residues 67–87 (ILSMLVIVMCIAVFACVASTL) traverse the membrane as a helical segment. At 88 to 140 (AWDRAYGTGIFGGSMNYPYGSGFGSYGGGFGGYGYGYGYGYGGYTDPRAAKGF) the chain is on the extracellular side. The chain crosses the membrane as a helical span at residues 141-161 (LLAMAAFCFIASLVIFVTSVI). The Cytoplasmic segment spans residues 162-173 (RSGMSRTRRYYL). A helical membrane pass occupies residues 174-194 (IVIIVSAILGIMVFIATIVYI). Topologically, residues 195 to 244 (MGVNPTAQASGSMYGSQIYTICSQFYTPGGTGLYVDQYLYHYCVVDPQEA) are extracellular. A disulfide bridge connects residues Cys-216 and Cys-237. Residues 245-265 (IAIVLGFMIIVAFALIIVFAV) traverse the membrane as a helical segment. The Cytoplasmic segment spans residues 266–523 (KTRRKMDRYD…MVGDYDRRKT (258 aa)). Ser-302 is subject to Phosphoserine. Positions 302-338 (SAGTQDMPPPPSDYAERVDSPMAYSSNGKVNGKRSYP) are disordered. Thr-305 carries the phosphothreonine modification. Residues Ser-313, Ser-321, Ser-340, and Ser-360 each carry the phosphoserine modification. Residues 363–408 (DFRQPRYSSNDNLETPSKRTPTKGKAGKAKRTDPDHYETDYTTGGE) form a disordered region. Positions 368-381 (RYSSNDNLETPSKR) are enriched in polar residues. Tyr-369 carries the post-translational modification Phosphotyrosine. 2 positions are modified to phosphoserine: Ser-370 and Ser-371. Positions 382–391 (TPTKGKAGKA) are enriched in basic residues. Over residues 392–401 (KRTDPDHYET) the composition is skewed to basic and acidic residues. Phosphotyrosine occurs at positions 399 and 403. Phosphothreonine; by PKC/PRKCH occurs at positions 404 and 405. At Ser-409 the chain carries Phosphoserine. The 109-residue stretch at 415 to 523 (EDWLREYPPI…MVGDYDRRKT (109 aa)) folds into the OCEL domain. Residues 433-489 (YKRNFDAGLQEYKSLLAELDEVNKELSRLDRELDDYREESEEYMAAADEYNRLKQVK) are a coiled coil. Ser-491 is modified (phosphoserine).

It belongs to the ELL/occludin family. In terms of assembly, interacts with TJP1/ZO1. Interacts with VAPA. Interacts with CLDN1, CLDN6, CLDN9, CLDN11, CLDN12 and CLDN17. Interacts with PLSCR1. Interacts with LSR, ILDR1 and ILDR2. Interacts with TJP2/ZO2. Dephosphorylated by PTPRJ.

Its subcellular location is the cell membrane. The protein localises to the cell junction. It is found in the tight junction. Its function is as follows. May play a role in the formation and regulation of the tight junction (TJ) paracellular permeability barrier. May be involved in the organization of actin in endothelial cells. This is Occludin (Ocln) from Rattus norvegicus (Rat).